Here is a 294-residue protein sequence, read N- to C-terminus: 4-hydroxy-tetrahydrodipicolinate synthase (294 aa).

Residue Thr46 participates in pyruvate binding. Tyr135 functions as the Proton donor/acceptor in the catalytic mechanism. The active-site Schiff-base intermediate with substrate is the Lys164. Ile205 is a pyruvate binding site.

Belongs to the DapA family. Homotetramer; dimer of dimers.

It is found in the cytoplasm. It catalyses the reaction L-aspartate 4-semialdehyde + pyruvate = (2S,4S)-4-hydroxy-2,3,4,5-tetrahydrodipicolinate + H2O + H(+). It functions in the pathway amino-acid biosynthesis; L-lysine biosynthesis via DAP pathway; (S)-tetrahydrodipicolinate from L-aspartate: step 3/4. Catalyzes the condensation of (S)-aspartate-beta-semialdehyde [(S)-ASA] and pyruvate to 4-hydroxy-tetrahydrodipicolinate (HTPA). This chain is 4-hydroxy-tetrahydrodipicolinate synthase, found in Nitratiruptor sp. (strain SB155-2).